The primary structure comprises 64 residues: Probable cytochrome c oxidase subunit 5C-1 (64 aa).

Residues 15–34 (SVVKELFIGLALGLAAGGLW) form a helical membrane-spanning segment.

Belongs to the cytochrome c oxidase subunit 5C family.

The protein localises to the mitochondrion inner membrane. Its function is as follows. This protein is one of the nuclear-coded polypeptide chains of cytochrome c oxidase, the terminal oxidase in mitochondrial electron transport. The polypeptide is Probable cytochrome c oxidase subunit 5C-1 (Arabidopsis thaliana (Mouse-ear cress)).